The chain runs to 377 residues: Chaperone protein DnaJ (377 aa).

A J domain is found at 5–70 (DFYEVLGVDR…EKRSAYDRMG (66 aa)). A CR-type zinc finger spans residues 136 to 214 (GCKKEISFTA…CHGTGVKDKS (79 aa)). Cys-149, Cys-152, Cys-166, Cys-169, Cys-188, Cys-191, Cys-202, and Cys-205 together coordinate Zn(2+). 4 CXXCXGXG motif repeats span residues 149–156 (CETCDGKG), 166–173 (CSTCGGHG), 188–195 (CPNCGGSG), and 202–209 (CNDCHGTG). A disordered region spans residues 353 to 377 (LDGDSKHHQSPKKKSFFEKLGDLFD). The segment covering 367-377 (SFFEKLGDLFD) has biased composition (basic and acidic residues).

It belongs to the DnaJ family. As to quaternary structure, homodimer. The cofactor is Zn(2+).

The protein resides in the cytoplasm. In terms of biological role, participates actively in the response to hyperosmotic and heat shock by preventing the aggregation of stress-denatured proteins and by disaggregating proteins, also in an autonomous, DnaK-independent fashion. Unfolded proteins bind initially to DnaJ; upon interaction with the DnaJ-bound protein, DnaK hydrolyzes its bound ATP, resulting in the formation of a stable complex. GrpE releases ADP from DnaK; ATP binding to DnaK triggers the release of the substrate protein, thus completing the reaction cycle. Several rounds of ATP-dependent interactions between DnaJ, DnaK and GrpE are required for fully efficient folding. Also involved, together with DnaK and GrpE, in the DNA replication of plasmids through activation of initiation proteins. This chain is Chaperone protein DnaJ, found in Psychrobacter sp. (strain PRwf-1).